The sequence spans 303 residues: Protease HtpX (303 aa).

The next 2 helical transmembrane spans lie at 4-24 and 42-62; these read IGLF…VFGI and IASL…ISLF. His-149 contacts Zn(2+). Residue Glu-150 is part of the active site. His-153 lines the Zn(2+) pocket. Transmembrane regions (helical) follow at residues 157–177 and 200–220; these read GDMV…MFFA and FVTS…IVMW. Glu-226 contributes to the Zn(2+) binding site.

Belongs to the peptidase M48B family. The cofactor is Zn(2+).

It is found in the cell inner membrane. This chain is Protease HtpX, found in Psychrobacter sp. (strain PRwf-1).